The primary structure comprises 181 residues: ATP synthase subunit delta (181 aa).

It belongs to the ATPase delta chain family. F-type ATPases have 2 components, F(1) - the catalytic core - and F(0) - the membrane proton channel. F(1) has five subunits: alpha(3), beta(3), gamma(1), delta(1), epsilon(1). F(0) has three main subunits: a(1), b(2) and c(10-14). The alpha and beta chains form an alternating ring which encloses part of the gamma chain. F(1) is attached to F(0) by a central stalk formed by the gamma and epsilon chains, while a peripheral stalk is formed by the delta and b chains.

It is found in the cell inner membrane. Functionally, f(1)F(0) ATP synthase produces ATP from ADP in the presence of a proton or sodium gradient. F-type ATPases consist of two structural domains, F(1) containing the extramembraneous catalytic core and F(0) containing the membrane proton channel, linked together by a central stalk and a peripheral stalk. During catalysis, ATP synthesis in the catalytic domain of F(1) is coupled via a rotary mechanism of the central stalk subunits to proton translocation. This protein is part of the stalk that links CF(0) to CF(1). It either transmits conformational changes from CF(0) to CF(1) or is implicated in proton conduction. In Orientia tsutsugamushi (strain Boryong) (Rickettsia tsutsugamushi), this protein is ATP synthase subunit delta.